A 479-amino-acid polypeptide reads, in one-letter code: Glutamate--tRNA ligase (479 aa).

Residues 9 to 19 (PSPTGLFHIGT) carry the 'HIGH' region motif. The 'KMSKS' region motif lies at 248 to 252 (KLSKR). Lys-251 contributes to the ATP binding site.

This sequence belongs to the class-I aminoacyl-tRNA synthetase family. Glutamate--tRNA ligase type 1 subfamily. Monomer.

It is found in the cytoplasm. The enzyme catalyses tRNA(Glu) + L-glutamate + ATP = L-glutamyl-tRNA(Glu) + AMP + diphosphate. Its function is as follows. Catalyzes the attachment of glutamate to tRNA(Glu) in a two-step reaction: glutamate is first activated by ATP to form Glu-AMP and then transferred to the acceptor end of tRNA(Glu). This chain is Glutamate--tRNA ligase, found in Prochlorococcus marinus (strain MIT 9215).